Here is a 497-residue protein sequence, read N- to C-terminus: Glycerol kinase (497 aa).

T13 provides a ligand contact to ADP. T13, T14, and S15 together coordinate ATP. T13 serves as a coordination point for sn-glycerol 3-phosphate. R17 provides a ligand contact to ADP. Sn-glycerol 3-phosphate-binding residues include R83, E84, and Y135. Residues R83, E84, and Y135 each coordinate glycerol. H231 bears the Phosphohistidine; by HPr mark. D245 serves as a coordination point for sn-glycerol 3-phosphate. Glycerol contacts are provided by D245 and Q246. Residues T267 and G310 each coordinate ADP. ATP-binding residues include T267, G310, Q314, and G411. Residues G411 and N415 each coordinate ADP.

This sequence belongs to the FGGY kinase family. In terms of assembly, homotetramer and homodimer (in equilibrium). The phosphoenolpyruvate-dependent sugar phosphotransferase system (PTS), including enzyme I, and histidine-containing protein (HPr) are required for the phosphorylation, which leads to the activation of the enzyme.

It carries out the reaction glycerol + ATP = sn-glycerol 3-phosphate + ADP + H(+). The protein operates within polyol metabolism; glycerol degradation via glycerol kinase pathway; sn-glycerol 3-phosphate from glycerol: step 1/1. With respect to regulation, activated by phosphorylation and inhibited by fructose 1,6-bisphosphate (FBP). Functionally, key enzyme in the regulation of glycerol uptake and metabolism. Catalyzes the phosphorylation of glycerol to yield sn-glycerol 3-phosphate. This chain is Glycerol kinase, found in Listeria monocytogenes serotype 4b (strain F2365).